A 519-amino-acid chain; its full sequence is DNA damage-binding protein CMR1 (519 aa).

A disordered region spans residues 35 to 92 (AEAGLGPTGKSRAAASSKPRVKKPAPKKIKQEDIAPRRTSSRLKGIEADSEKAKRKAE). The span at 53 to 62 (PRVKKPAPKK) shows a compositional bias: basic residues. Basic and acidic residues predominate over residues 78-92 (KGIEADSEKAKRKAE). WD repeat units follow at residues 240–280 (PHTR…AVEV), 287–327 (NEDQ…DQAE), 331–371 (LSEK…GKGD), 380–420 (EHES…EWAT), 442–485 (GRWV…LAQL), and 488–519 (DGIT…CLWM).

This sequence belongs to the WD repeat DDB2/WDR76 family.

DNA-binding protein that binds to both single- and double-stranded DNA. Binds preferentially to UV-damaged DNA. May be involved in DNA-metabolic processes. The protein is DNA damage-binding protein CMR1 of Phaeosphaeria nodorum (strain SN15 / ATCC MYA-4574 / FGSC 10173) (Glume blotch fungus).